The following is a 307-amino-acid chain: MKTFLILALLAIVATTARIAVRVPVPQLQPQNPSQQQPQEQVPLVQQQQFPGQQQPFPPQQPYPQPQPFPSQQPYLQLQPFPQPQLPYPQPQLPYPQPQLPYPQPQPFRPQQPYPQSQPQYSQPQQPISQQQQQQQQQQQQKQQQQQQQQILQQILQQQLIPCRDVVLQQHSIAYGSSQVLQQSTYQLVQQLCCQQLWQIPEQSRCQAIHNVVHAIILHQQQQQQQQQQQQPLSQVSFQQPQQQYPSGQGSFQPSQQNPQAQGSVQPQQLPQFEEIRNLALETLPAMCNVYIPPYCTIAPVGIFGTN.

The first 20 residues, 1–20, serve as a signal peptide directing secretion; that stretch reads MKTFLILALLAIVATTARIA. Over residues 29 to 55 the composition is skewed to low complexity; the sequence is QPQNPSQQQPQEQVPLVQQQQFPGQQQ. 2 disordered regions span residues 29-134 and 242-267; these read QPQN…QQQQ and QQQY…SVQP. Pro residues-rich tracts occupy residues 56 to 71 and 81 to 113; these read PFPP…PFPS and FPQP…PQQP. The tract at residues 76–108 is sufficient to initiate the primary inflammatory response to gluten in Celiac Sprue patients; the sequence is LQLQPFPQPQLPYPQPQLPYPQPQLPYPQPQPF. Composition is skewed to low complexity over residues 114–134 and 242–260; these read YPQS…QQQQ and QQQY…QNPQ.

This sequence belongs to the gliadin/glutenin family. Post-translationally, substrate of transglutaminase. Expressed in endosperm.

In terms of biological role, gliadin is the major seed storage protein in wheat. The protein is Alpha/beta-gliadin MM1 of Triticum aestivum (Wheat).